A 180-amino-acid chain; its full sequence is Adenine phosphoribosyltransferase (180 aa).

An N-acetylserine modification is found at Ser-2. Residues Ser-15 and Ser-30 each carry the phosphoserine modification. Tyr-60 bears the Phosphotyrosine mark. Ser-66 is modified (phosphoserine). Residue Lys-114 is modified to N6-acetyllysine. Position 135 is a phosphothreonine (Thr-135).

It belongs to the purine/pyrimidine phosphoribosyltransferase family. As to quaternary structure, homodimer.

It is found in the cytoplasm. The enzyme catalyses AMP + diphosphate = 5-phospho-alpha-D-ribose 1-diphosphate + adenine. Its pathway is purine metabolism; AMP biosynthesis via salvage pathway; AMP from adenine: step 1/1. Functionally, catalyzes a salvage reaction resulting in the formation of AMP, that is energically less costly than de novo synthesis. The chain is Adenine phosphoribosyltransferase from Mus musculus (Mouse).